Consider the following 338-residue polypeptide: Homocysteine S-methyltransferase 3 (338 aa).

One can recognise a Hcy-binding domain in the interval 12 to 326; sequence AVRRWVDAAG…NTIRAIHRTL (315 aa). Zn(2+) contacts are provided by Cys244, Cys311, and Cys312.

Monomer. Zn(2+) is required as a cofactor.

It carries out the reaction S-methyl-L-methionine + L-homocysteine = 2 L-methionine + H(+). Functionally, catalyzes methyl transfer from S-methylmethionine (SMM) to adenosyl-L-homocysteine (AdoMet). SMM degradation (by HMT-1, HMT-2, HMT-3 and HMT-4) and biosynthesis (by MMT1) constitute the SMM cycle in plants, which is probably required to achieve short term control of AdoMet level. The protein is Homocysteine S-methyltransferase 3 (HMT-3) of Zea mays (Maize).